A 424-amino-acid chain; its full sequence is Tyrosine--tRNA ligase (424 aa).

Tyrosine 37 contributes to the L-tyrosine binding site. The 'HIGH' region motif lies at isoleucine 42 to histidine 51. Residues tyrosine 175 and glutamine 179 each coordinate L-tyrosine. Positions lysine 235–threonine 239 match the 'KMSKS' region motif. Lysine 238 provides a ligand contact to ATP. Positions glycine 356–lysine 414 constitute an S4 RNA-binding domain.

It belongs to the class-I aminoacyl-tRNA synthetase family. TyrS type 1 subfamily. As to quaternary structure, homodimer.

The protein resides in the cytoplasm. The catalysed reaction is tRNA(Tyr) + L-tyrosine + ATP = L-tyrosyl-tRNA(Tyr) + AMP + diphosphate + H(+). Catalyzes the attachment of tyrosine to tRNA(Tyr) in a two-step reaction: tyrosine is first activated by ATP to form Tyr-AMP and then transferred to the acceptor end of tRNA(Tyr). This Buchnera aphidicola subsp. Baizongia pistaciae (strain Bp) protein is Tyrosine--tRNA ligase.